We begin with the raw amino-acid sequence, 264 residues long: Acyl-[acyl-carrier-protein]--UDP-N-acetylglucosamine O-acyltransferase (264 aa).

The protein belongs to the transferase hexapeptide repeat family. LpxA subfamily. Homotrimer.

The protein localises to the cytoplasm. It carries out the reaction a (3R)-hydroxyacyl-[ACP] + UDP-N-acetyl-alpha-D-glucosamine = a UDP-3-O-[(3R)-3-hydroxyacyl]-N-acetyl-alpha-D-glucosamine + holo-[ACP]. Its pathway is glycolipid biosynthesis; lipid IV(A) biosynthesis; lipid IV(A) from (3R)-3-hydroxytetradecanoyl-[acyl-carrier-protein] and UDP-N-acetyl-alpha-D-glucosamine: step 1/6. Functionally, involved in the biosynthesis of lipid A, a phosphorylated glycolipid that anchors the lipopolysaccharide to the outer membrane of the cell. This chain is Acyl-[acyl-carrier-protein]--UDP-N-acetylglucosamine O-acyltransferase, found in Rickettsia typhi (strain ATCC VR-144 / Wilmington).